The chain runs to 173 residues: Peptide deformylase (173 aa).

Residues Cys-98 and His-140 each contribute to the Fe cation site. Glu-141 is a catalytic residue. His-144 lines the Fe cation pocket.

Belongs to the polypeptide deformylase family. Fe(2+) serves as cofactor.

It catalyses the reaction N-terminal N-formyl-L-methionyl-[peptide] + H2O = N-terminal L-methionyl-[peptide] + formate. Its function is as follows. Removes the formyl group from the N-terminal Met of newly synthesized proteins. Requires at least a dipeptide for an efficient rate of reaction. N-terminal L-methionine is a prerequisite for activity but the enzyme has broad specificity at other positions. This is Peptide deformylase from Caulobacter sp. (strain K31).